We begin with the raw amino-acid sequence, 195 residues long: Probable thymidylate kinase (195 aa).

7–14 (GIDGVGKT) provides a ligand contact to ATP.

Belongs to the thymidylate kinase family.

The catalysed reaction is dTMP + ATP = dTDP + ADP. The protein is Probable thymidylate kinase of Methanosphaera stadtmanae (strain ATCC 43021 / DSM 3091 / JCM 11832 / MCB-3).